Reading from the N-terminus, the 63-residue chain is Small ribosomal subunit protein bS21 (63 aa).

This sequence belongs to the bacterial ribosomal protein bS21 family.

The sequence is that of Small ribosomal subunit protein bS21 from Porphyromonas gingivalis (strain ATCC BAA-308 / W83).